A 178-amino-acid polypeptide reads, in one-letter code: Oligoribonuclease (178 aa).

Residues 7-168 enclose the Exonuclease domain; that stretch reads LIWIDLEMTG…DDIRESIAEL (162 aa). Y128 is an active-site residue.

Belongs to the oligoribonuclease family.

Its subcellular location is the cytoplasm. Functionally, 3'-to-5' exoribonuclease specific for small oligoribonucleotides. The sequence is that of Oligoribonuclease from Pseudomonas syringae pv. tomato (strain ATCC BAA-871 / DC3000).